The chain runs to 840 residues: Heat shock 70 kDa protein 4 (840 aa).

Position 53 is an N6-acetyllysine (lysine 53). A Phosphoserine modification is found at serine 76. Phosphotyrosine is present on residues tyrosine 89 and tyrosine 336. Phosphoserine occurs at positions 393 and 415. Lysine 430 is subject to N6-acetyllysine. The disordered stretch occupies residues 500–575 (VHKSEESEEP…QAKKAKVKTS (76 aa)). A compositionally biased stretch (basic and acidic residues) spans 514–533 (QNAKEEEKMQVDQEEPHTEE). Threonine 538 carries the phosphothreonine modification. Phosphoserine is present on serine 546. Position 660 is a phosphotyrosine (tyrosine 660). Serine 756 carries the phosphoserine modification. The residue at position 773 (lysine 773) is an N6-methyllysine. A disordered region spans residues 781 to 840 (PIISKPKPKVEPPKEEPKHAEQNGPVDGQGDNPGTQAAEHGADTAVPSDGDKKLPEMDID). Composition is skewed to basic and acidic residues over residues 788 to 801 (PKVEPPKEEPKHAE) and 829 to 840 (DGDKKLPEMDID).

The protein belongs to the heat shock protein 70 family. As to quaternary structure, interacts with TJP1/ZO-1. Ubiquitous. Highly expressed in testis.

The protein resides in the cytoplasm. In Rattus norvegicus (Rat), this protein is Heat shock 70 kDa protein 4 (Hspa4).